Here is a 151-residue protein sequence, read N- to C-terminus: Troponin C, isoallergen Bla g 6.0101 (151 aa).

EF-hand domains follow at residues 7–42 (EQIQLLKKAFDAFDREKKGCISTEMVGTILEMLGHR), 43–78 (LDDDMLQEIIAEVDADGSGELEFEEFVSLASRFLVE), 83–118 (AMQQELREAFRLYDKEGNGYITTNVLREILKELDDK), and 119–151 (ITAEDLDMMIEEIDSDGSGTVDFDEFMEVMTGE). 5 residues coordinate Ca(2+): Asp56, Asp58, Ser60, Glu62, and Glu67. Residues Asp132, Asp134, Ser136, Thr138, and Glu143 each coordinate Ca(2+).

Belongs to the troponin C family.

Troponin is the central regulatory protein of striated muscle contraction. It consists of three components: Troponin-I (Tn-I) which is the inhibitor of actomyosin ATPase, Troponin-T (Tn-T) which contains the binding site for tropomyosin and Troponin-C (Tn-C). The binding of calcium to Tn-C abolishes the inhibitory action of Tn on actin filaments. The protein is Troponin C, isoallergen Bla g 6.0101 of Blattella germanica (German cockroach).